We begin with the raw amino-acid sequence, 464 residues long: JmjC domain-containing protein 1 (464 aa).

The JmjC domain occupies Leu-182 to Tyr-349.

This Schizosaccharomyces pombe (strain 972 / ATCC 24843) (Fission yeast) protein is JmjC domain-containing protein 1 (jmj1).